Consider the following 478-residue polypeptide: Ankyrin repeat and BTB/POZ domain-containing protein 1 (478 aa).

2 ANK repeats span residues 1 to 31 (MDTSDLFASCRKGDVGRVRYLLEQRDVEVNV) and 35 to 64 (WDSTPLYYACLCGHEELVLYLLANGARCEA). BTB domains lie at 115–182 (SDVV…DIGV) and 272–346 (PDIC…ELSP). The stretch at 451-477 (VQTYSAIEEAQQRLRALEDLLVSIGLD) forms a coiled coil.

In terms of tissue distribution, ubiquitously expressed in all fetal tissues examined including heart, brain, liver, and kidney. Also expressed at lower levels in both adult heart and hypertrophic heart.

It localises to the cytoplasm. Its function is as follows. May act as a mediator of the PTEN growth-suppressive signaling pathway. May play a role in developmental processes. The sequence is that of Ankyrin repeat and BTB/POZ domain-containing protein 1 from Homo sapiens (Human).